The sequence spans 483 residues: Regulatory protein ViaA (483 aa).

It belongs to the ViaA family. In terms of assembly, homodimer. Interacts with RavA.

It localises to the cytoplasm. In terms of biological role, component of the RavA-ViaA chaperone complex, which may act on the membrane to optimize the function of some of the respiratory chains. ViaA stimulates the ATPase activity of RavA. The sequence is that of Regulatory protein ViaA from Escherichia coli O6:K15:H31 (strain 536 / UPEC).